The sequence spans 74 residues: Putative defensin-like protein 27 (74 aa).

Positions 1–19 are cleaved as a signal peptide; the sequence is MVHPRFVFFAFLALSVLLA. Intrachain disulfides connect Cys36-Cys74, Cys46-Cys65, Cys51-Cys70, and Cys55-Cys72.

This sequence belongs to the DEFL family.

Its subcellular location is the secreted. The protein is Putative defensin-like protein 27 of Arabidopsis thaliana (Mouse-ear cress).